A 339-amino-acid chain; its full sequence is Dihydroorotate dehydrogenase (quinone) (339 aa).

Residues 62-66 and T86 each bind FMN; that span reads AGMDK. K66 is a substrate binding site. 111-115 serves as a coordination point for substrate; the sequence is NRMGF. N139 and N172 together coordinate FMN. Residue N172 participates in substrate binding. Residue S175 is the Nucleophile of the active site. N177 contacts substrate. FMN-binding residues include K217 and T245. 246–247 lines the substrate pocket; it reads NT. FMN contacts are provided by residues G268, G297, and 318–319; that span reads YS.

The protein belongs to the dihydroorotate dehydrogenase family. Type 2 subfamily. As to quaternary structure, monomer. The cofactor is FMN.

Its subcellular location is the cell membrane. The enzyme catalyses (S)-dihydroorotate + a quinone = orotate + a quinol. Its pathway is pyrimidine metabolism; UMP biosynthesis via de novo pathway; orotate from (S)-dihydroorotate (quinone route): step 1/1. Its function is as follows. Catalyzes the conversion of dihydroorotate to orotate with quinone as electron acceptor. This Shewanella baltica (strain OS155 / ATCC BAA-1091) protein is Dihydroorotate dehydrogenase (quinone).